We begin with the raw amino-acid sequence, 160 residues long: Large ribosomal subunit protein uL16 (160 aa).

The disordered stretch occupies residues 138–160; the sequence is INLSSDSSGEGKTGKDSKEEVKK. A compositionally biased stretch (basic and acidic residues) spans 149–160; the sequence is KTGKDSKEEVKK.

Belongs to the universal ribosomal protein uL16 family. Part of the 50S ribosomal subunit.

Binds 23S rRNA and is also seen to make contacts with the A and possibly P site tRNAs. This Prochlorococcus marinus subsp. pastoris (strain CCMP1986 / NIES-2087 / MED4) protein is Large ribosomal subunit protein uL16.